The chain runs to 147 residues: Small ribosomal subunit protein uS12 (147 aa).

The protein belongs to the universal ribosomal protein uS12 family. Part of the 30S ribosomal subunit.

Its function is as follows. With S4 and S5 plays an important role in translational accuracy. Located at the interface of the 30S and 50S subunits. This chain is Small ribosomal subunit protein uS12, found in Methanococcus maripaludis (strain C5 / ATCC BAA-1333).